The chain runs to 343 residues: Dihydroorotase (343 aa).

Residues His-14 and His-16 each contribute to the Zn(2+) site. Substrate-binding positions include 16–18 (HLR) and Asn-42. Lys-97, His-136, His-170, and Asp-242 together coordinate Zn(2+). Lys-97 is modified (N6-carboxylysine). His-136 is a binding site for substrate. Asp-242 is a catalytic residue. Substrate-binding residues include His-246 and Ala-258.

This sequence belongs to the metallo-dependent hydrolases superfamily. DHOase family. Class II DHOase subfamily. Homodimer. It depends on Zn(2+) as a cofactor.

The catalysed reaction is (S)-dihydroorotate + H2O = N-carbamoyl-L-aspartate + H(+). Its pathway is pyrimidine metabolism; UMP biosynthesis via de novo pathway; (S)-dihydroorotate from bicarbonate: step 3/3. Its function is as follows. Catalyzes the reversible cyclization of carbamoyl aspartate to dihydroorotate. In Helicobacter hepaticus (strain ATCC 51449 / 3B1), this protein is Dihydroorotase.